Consider the following 284-residue polypeptide: Extracellular metalloprotease VDBG_01143 (284 aa).

A signal peptide spans 1–18; sequence MLFKSLFVAAATAVGVSG. Asparagine 58 is a glycosylation site (N-linked (GlcNAc...) asparagine). A Zn(2+)-binding site is contributed by histidine 200. Glutamate 201 is an active-site residue. Zn(2+) is bound at residue histidine 204. A disulfide bridge connects residues cysteine 236 and cysteine 263.

This sequence belongs to the peptidase M43B family.

It localises to the secreted. Functionally, secreted metalloproteinase that allows assimilation of proteinaceous substrates. In Verticillium alfalfae (strain VaMs.102 / ATCC MYA-4576 / FGSC 10136) (Verticillium wilt of alfalfa), this protein is Extracellular metalloprotease VDBG_01143.